We begin with the raw amino-acid sequence, 343 residues long: Putative outer membrane protein y4fJ (343 aa).

A signal peptide spans 1-17 (MRMNFSTVLLGSSVALA).

Belongs to the alphaproteobacteria porin family.

Its subcellular location is the cell outer membrane. May act as an outer membrane pore. This Sinorhizobium fredii (strain NBRC 101917 / NGR234) protein is Putative outer membrane protein y4fJ.